The sequence spans 171 residues: Secreted thaumatin-like protein calA (171 aa).

The signal sequence occupies residues 1–18 (MLFNKIISLAATLATASA). 2 N-linked (GlcNAc...) asparagine glycosylation sites follow: asparagine 37 and asparagine 141. 2 cysteine pairs are disulfide-bonded: cysteine 130-cysteine 157 and cysteine 135-cysteine 142.

The protein belongs to the thaumatin family.

It is found in the secreted. Its subcellular location is the extracellular space. It localises to the extracellular matrix. The protein localises to the cell wall. Functionally, secreted thaumatin-like protein that, with cetA, plays an essential role in early conidial germination with a possible role in cell wall remodeling. This is Secreted thaumatin-like protein calA from Emericella nidulans (strain FGSC A4 / ATCC 38163 / CBS 112.46 / NRRL 194 / M139) (Aspergillus nidulans).